We begin with the raw amino-acid sequence, 241 residues long: Uridylate kinase (241 aa).

12–15 contacts ATP; the sequence is KVSG. Positions 20 to 25 are involved in allosteric activation by GTP; that stretch reads GEKGTG. Gly54 is a binding site for UMP. Gly55 and Arg59 together coordinate ATP. Residues Asp74 and 135–142 each bind UMP; that span reads TGNPYFST. The ATP site is built by Asn163, Tyr169, and Asp172.

It belongs to the UMP kinase family. In terms of assembly, homohexamer.

Its subcellular location is the cytoplasm. It catalyses the reaction UMP + ATP = UDP + ADP. It functions in the pathway pyrimidine metabolism; CTP biosynthesis via de novo pathway; UDP from UMP (UMPK route): step 1/1. With respect to regulation, allosterically activated by GTP. Inhibited by UTP. Catalyzes the reversible phosphorylation of UMP to UDP. The polypeptide is Uridylate kinase (Lactobacillus johnsonii (strain CNCM I-12250 / La1 / NCC 533)).